Here is a 231-residue protein sequence, read N- to C-terminus: UPF0702 transmembrane protein YetF (231 aa).

Transmembrane regions (helical) follow at residues 5–25 (LSVA…LKLL), 33–53 (ITPF…NAVY), and 59–79 (IKEI…IEFI).

This sequence belongs to the UPF0702 family.

It localises to the cell membrane. This chain is UPF0702 transmembrane protein YetF (yetF), found in Bacillus subtilis (strain 168).